We begin with the raw amino-acid sequence, 415 residues long: MSILETFDPAVAEAIRHETERQEYNLELIASENFVSEAVMEAQGSVLTNKYAEGYPGKRYYGGCHHVDVVENLAIERAKELFGADHANVQPHSGSQANMAVYFSVLKPGDTILGMNLSHGGHLTHGSPVNFSGRFFNVVPYGVSQETETIDFNEVERLALEHKPKLIVVGASAYPRVLDFAAFRAIADKVGALVMVDMAHIAGLVAAGLHPSPVPYAEFVTTTTHKTLRGPRGGMILCREEFAKTLNSNIFPGIQGGPLMHVIAAKAVAFKEALAPEFKLYQEQIVKNARTLADELMKRGFRLVSGGTDNHLMLVNLTGTELTGKVAEEALDKAGITVNKNTVPFETRSPFVTSGFRIGTPAATSHGLKEAEMVEVAAFIAEALANVGNEAKLAEVKGKVNALMGRFPLYASRLK.

Residues Leu117 and 121 to 123 (GHL) contribute to the (6S)-5,6,7,8-tetrahydrofolate site. At Lys226 the chain carries N6-(pyridoxal phosphate)lysine. (6S)-5,6,7,8-tetrahydrofolate is bound by residues Glu241 and 349–351 (SPF).

Belongs to the SHMT family. Homodimer. Requires pyridoxal 5'-phosphate as cofactor.

It localises to the cytoplasm. The enzyme catalyses (6R)-5,10-methylene-5,6,7,8-tetrahydrofolate + glycine + H2O = (6S)-5,6,7,8-tetrahydrofolate + L-serine. It participates in one-carbon metabolism; tetrahydrofolate interconversion. The protein operates within amino-acid biosynthesis; glycine biosynthesis; glycine from L-serine: step 1/1. In terms of biological role, catalyzes the reversible interconversion of serine and glycine with tetrahydrofolate (THF) serving as the one-carbon carrier. This reaction serves as the major source of one-carbon groups required for the biosynthesis of purines, thymidylate, methionine, and other important biomolecules. Also exhibits THF-independent aldolase activity toward beta-hydroxyamino acids, producing glycine and aldehydes, via a retro-aldol mechanism. The protein is Serine hydroxymethyltransferase of Geobacter metallireducens (strain ATCC 53774 / DSM 7210 / GS-15).